Consider the following 1306-residue polypeptide: MGAASGRRGPGLLLPLPLLLLLPPQPALALDPGLQPGNFSADEAGAQLFAQSYNSSAEQVLFQSVAASWAHDTNITAENARRQEEAALLSQEFAEAWGQKAKELYEPIWQNFTDPQLRRIIGAVRTLGSANLPLAKRQQYNALLSNMSRIYSTAKVCLPNKTATCWSLDPDLTNILASSRSYAMLLFAWEGWHNAAGIPLKPLYEDFTALSNEAYKQDGFTDTGAYWRSWYNSPTFEDDLEHLYQQLEPLYLNLHAFVRRALHRRYGDRYINLRGPIPAHLLGDMWAQSWENIYDMVVPFPDKPNLDVTSTMLQQGWNATHMFRVAEEFFTSLELSPMPPEFWEGSMLEKPADGREVVCHASAWDFYNRKDFRIKQCTRVTMDQLSTVHHEMGHIQYYLQYKDLPVSLRRGANPGFHEAIGDVLALSVSTPEHLHKIGLLDRVTNDTESDINYLLKMALEKIAFLPFGYLVDQWRWGVFSGRTPPSRYNFDWWYLRTKYQGICPPVTRNETHFDAGAKFHVPNVTPYIRYFVSFVLQFQFHEALCKEAGYEGPLHQCDIYRSTKAGAKLRKVLQAGSSRPWQEVLKDMVGLDALDAQPLLKYFQPVTQWLQEQNQQNGEVLGWPEYQWHPPLPDNYPEGIDLVTDEAEASKFVEEYDRTSQVVWNEYAEANWNYNTNITTETSKILLQKNMQIANHTLKYGTQARKFDVNQLQNTTIKRIIKKVQDLERAALPAQELEEYNKILLDMETTYSVATVCHPNGSCLQLEPDLTNVMATSRKYEDLLWAWEGWRDKAGRAILQFYPKYVELINQAARLNGYVDAGDSWRSMYETPSLEQDLERLFQELQPLYLNLHAYVRRALHRHYGAQHINLEGPIPAHLLGNMWAQTWSNIYDLVVPFPSAPSMDTTEAMLKQGWTPRRMFKEADDFFTSLGLLPVPPEFWNKSMLEKPTDGREVVCHASAWDFYNGKDFRIKQCTTVNLEDLVVAHHEMGHIQYFMQYKDLPVALREGANPGFHEAIGDVLALSVSTPKHLHSLNLLSSEGGSDEHDINFLMKMALDKIAFIPFSYLVDQWRWRVFDGSITKENYNQEWWSLRLKYQGLCPPVPRTQGDFDPGAKFHIPSSVPYIRYFVSFIIQFQFHEALCQAAGHTGPLHKCDIYQSKEAGQRLATAMKLGFSRPWPEAMQLITGQPNMSASAMLSYFKPLLDWLRTENELHGEKLGWPQYNWTPNSARSEGPLPDSGRVSFLGLDLDAQQARVGQWLLLFLGIALLVATLGLSQRLFSIRHRSLHRHSHGPQFGSEVELRHS.

An N-terminal signal peptide occupies residues 1-29 (MGAASGRRGPGLLLPLPLLLLLPPQPALA). At 30-1256 (LDPGLQPGNF…GLDLDAQQAR (1227 aa)) the chain is on the extracellular side. 9 N-linked (GlcNAc...) asparagine glycosylation sites follow: Asn-38, Asn-54, Asn-74, Glu-103, Asn-111, Ile-121, Tyr-140, Asn-146, and Asn-160. 2 consecutive Peptidase M2 domains span residues 40–624 (SADE…LGWP) and 643–1222 (VTDE…LGWP). A disulfide bond links Cys-157 and Cys-165. Position 231 (Tyr-231) interacts with chloride. Residues Asn-318 and Asn-368 are each glycosylated (N-linked (GlcNAc...) asparagine). A disulfide bond links Cys-359 and Cys-377. His-390 serves as a coordination point for Zn(2+). The Proton acceptor 1 role is filled by Glu-391. Residues His-394, Pro-414, Glu-418, and Arg-442 each coordinate Zn(2+). N-linked (GlcNAc...) asparagine glycosylation is found at Asn-445 and Asn-509. The active-site Proton donor 1 is His-520. Chloride is bound at residue Arg-529. A disulfide bond links Cys-545 and Cys-557. N-linked (GlcNAc...) asparagine glycosylation is found at Asn-617 and Asn-677. 2 N-linked (GlcNAc...) (complex) asparagine glycosylation sites follow: Asn-695 and Asn-714. Cys-757 and Cys-763 are joined by a disulfide. Asn-760 carries an N-linked (GlcNAc...) asparagine; partial glycan. The chloride site is built by Arg-791 and Tyr-829. Asn-942 carries N-linked (GlcNAc...) asparagine; partial glycosylation. The cysteines at positions 957 and 975 are disulfide-linked. His-988 serves as a coordination point for Zn(2+). The active-site Proton acceptor 2 is Glu-989. Zn(2+) is bound by residues His-992 and Glu-1016. Chloride-binding residues include Trp-1090 and Arg-1094. His-1118 acts as the Proton donor 2 in catalysis. Position 1127 (Arg-1127) interacts with chloride. The cysteines at positions 1143 and 1155 are disulfide-linked. Asn-1191 carries an N-linked (GlcNAc...) asparagine; partial glycan. Residues 1215 to 1256 (HGEKLGWPQYNWTPNSARSEGPLPDSGRVSFLGLDLDAQQAR) are juxtamembrane stalk. A helical transmembrane segment spans residues 1257–1277 (VGQWLLLFLGIALLVATLGLS). At 1278 to 1306 (QRLFSIRHRSLHRHSHGPQFGSEVELRHS) the chain is on the cytoplasmic side. Ser-1299 is modified (phosphoserine).

The protein belongs to the peptidase M2 family. Monomer and homodimer; homodimerizes following binding to an inhibitor. Interacts with calmodulin (CALM1, CALM2 or CALM3); interaction takes place in the cytoplasmic region and regulates phosphorylation and proteolytic cleavage. It depends on Zn(2+) as a cofactor. Chloride is required as a cofactor. Produced following proteolytic cleavage by secretase enzymes that cleave the transmembrane form in the juxtamembrane stalk region upstream of the transmembrane region. Cleavage can take place at different sites of the juxtamembrane stalk region. Post-translationally, phosphorylated by CK2 on Ser-1299; which allows membrane retention. Phosphorylated on tyrosine residues on its extracellular part, promoting cleavage by secretase enzymes and formation of the soluble form (Angiotensin-converting enzyme, soluble form). As to expression, ubiquitously expressed, with highest levels in lung, kidney, heart, gastrointestinal system and prostate. In terms of tissue distribution, specifically expressed in spermatocytes and adult testis.

It is found in the cell membrane. The protein localises to the cytoplasm. The protein resides in the secreted. The catalysed reaction is Release of a C-terminal dipeptide, oligopeptide-|-Xaa-Yaa, when Xaa is not Pro, and Yaa is neither Asp nor Glu. Thus, conversion of angiotensin I to angiotensin II, with increase in vasoconstrictor activity, but no action on angiotensin II.. It carries out the reaction angiotensin I + H2O = L-histidyl-L-leucine + angiotensin II. It catalyses the reaction bradykinin + H2O = L-Phe-L-Arg + bradykinin(1-7). The enzyme catalyses substance P + H2O = substance P(1-9) + L-Leu-L-Met-NH2. The catalysed reaction is substance P + H2O = substance P(1-8) + Gly-L-Leu-L-Met-NH2. It carries out the reaction substance P + H2O = L-Phe-L-Phe-Gly-L-Leu-L-Met-NH2 + substance P(1-6). It catalyses the reaction neurotensin + H2O = neurotensin(1-11) + L-isoleucyl-L-leucine. The enzyme catalyses goralatide + H2O = N-acetyl-L-seryl-L-aspartate + L-lysyl-L-proline. The catalysed reaction is Met-enkephalin + H2O = L-phenylalanyl-L-methionine + L-tyrosylglycylglycine. It carries out the reaction Leu-enkephalin + H2O = L-tyrosylglycylglycine + L-phenylalanyl-L-leucine. It catalyses the reaction Met-enkephalin-Arg-Phe + H2O = L-arginyl-L-phenylalanine + Met-enkephalin. With respect to regulation, the dipeptidyl carboxypeptidase activity is strongly activated by chloride. The dipeptidyl carboxypeptidase activity is specifically inhibited by lisinopril, captopril and enalaprilat. Its activity is regulated as follows. Strongly inhibited by lisinopril and captopril. Dipeptidyl carboxypeptidase that removes dipeptides from the C-terminus of a variety of circulating hormones, such as angiotensin I, bradykinin or enkephalins, thereby playing a key role in the regulation of blood pressure, electrolyte homeostasis or synaptic plasticity. Composed of two similar catalytic domains, each possessing a functional active site, with different selectivity for substrates. Plays a major role in the angiotensin-renin system that regulates blood pressure and sodium retention by the kidney by converting angiotensin I to angiotensin II, resulting in an increase of the vasoconstrictor activity of angiotensin. Also able to inactivate bradykinin, a potent vasodilator, and therefore enhance the blood pressure response. Acts as a regulator of synaptic transmission by mediating cleavage of neuropeptide hormones, such as substance P, neurotensin or enkephalins. Catalyzes degradation of different enkephalin neuropeptides (Met-enkephalin, Leu-enkephalin, Met-enkephalin-Arg-Phe and possibly Met-enkephalin-Arg-Gly-Leu). Acts as a regulator of synaptic plasticity in the nucleus accumbens of the brain by mediating cleavage of Met-enkephalin-Arg-Phe, a strong ligand of Mu-type opioid receptor OPRM1, into Met-enkephalin. Met-enkephalin-Arg-Phe cleavage by ACE decreases activation of OPRM1, leading to long-term synaptic potentiation of glutamate release. Also acts as a regulator of hematopoietic stem cell differentiation by mediating degradation of hemoregulatory peptide N-acetyl-SDKP (AcSDKP). Acts as a regulator of cannabinoid signaling pathway by mediating degradation of hemopressin, an antagonist peptide of the cannabinoid receptor CNR1. Involved in amyloid-beta metabolism by catalyzing degradation of Amyloid-beta protein 40 and Amyloid-beta protein 42 peptides, thereby preventing plaque formation. Catalyzes cleavage of cholecystokinin (maturation of Cholecystokinin-8 and Cholecystokinin-5) and Gonadoliberin-1 (both maturation and degradation) hormones. Degradation of hemoregulatory peptide N-acetyl-SDKP (AcSDKP) and amyloid-beta proteins is mediated by the N-terminal catalytic domain, while angiotensin I and cholecystokinin cleavage is mediated by the C-terminal catalytic region. Functionally, soluble form that is released in blood plasma and other body fluids following proteolytic cleavage in the juxtamembrane stalk region. In terms of biological role, isoform produced by alternative promoter usage that is specifically expressed in spermatocytes and adult testis, and which is required for male fertility. In contrast to somatic isoforms, only contains one catalytic domain. Acts as a dipeptidyl carboxypeptidase that removes dipeptides from the C-terminus of substrates. The identity of substrates that are needed for male fertility is unknown. May also have a glycosidase activity which releases GPI-anchored proteins from the membrane by cleaving the mannose linkage in the GPI moiety. The GPIase activity was reported to be essential for the egg-binding ability of the sperm. This activity is however unclear and has been challenged by other groups, suggesting that it may be indirect. The polypeptide is Angiotensin-converting enzyme (Homo sapiens (Human)).